The primary structure comprises 368 residues: MAKNDSKDANKEELLEKLVKELEKNHGTGSVMLMGKGLDNSNLAVVPSGCLSLDIALGVGGYPRGRIIEIYGNESSGKTTLALHSLAEVQKLNGIVAFVDAEHALDVEYARKLGVDVDKLIVSQPDYGEQALEIVDSLVRSNIVDLIVVDSVAALVPKAEIEGAMGDSHMGLQARLMSQALRKLAGSINKSKSIVIFINQVRMKIGVVYGNPETTTGGIALKFYATIRVEVRKGNPIREGKDQIGNETTLKVVKNKVAPPFKQANVDMIFGRGIPKENDIFNIAVEEELIQRKGAWFSFINENGEEISLGQGKTNSVSYLMENPDILDYLEYTIRKKHNLIIPDYLIEKFESNSSKGKKVKSEELQEN.

72 to 79 (GNESSGKT) serves as a coordination point for ATP.

This sequence belongs to the RecA family.

It is found in the cytoplasm. Its function is as follows. Can catalyze the hydrolysis of ATP in the presence of single-stranded DNA, the ATP-dependent uptake of single-stranded DNA by duplex DNA, and the ATP-dependent hybridization of homologous single-stranded DNAs. It interacts with LexA causing its activation and leading to its autocatalytic cleavage. In Petrotoga mobilis (strain DSM 10674 / SJ95), this protein is Protein RecA.